The primary structure comprises 372 residues: Ligninase H2 (372 aa).

The N-terminal stretch at 1–21 (MAFKQLLAALSVALTLQVTQA) is a signal peptide. A propeptide spanning residues 22 to 28 (APNLDKR) is cleaved from the precursor. 4 cysteine pairs are disulfide-bonded: cysteine 31–cysteine 44, cysteine 43–cysteine 314, cysteine 63–cysteine 149, and cysteine 278–cysteine 344. Histidine 76 serves as the catalytic Proton acceptor. 4 residues coordinate Ca(2+): aspartate 77, glycine 95, aspartate 97, and serine 99. Position 205 (histidine 205) interacts with heme b. Residues serine 206, aspartate 223, threonine 225, glutamine 228, and aspartate 230 each coordinate Ca(2+). An N-linked (GlcNAc...) asparagine glycan is attached at asparagine 286.

The protein belongs to the peroxidase family. Ligninase subfamily. Heme b serves as cofactor. Requires Ca(2+) as cofactor.

The enzyme catalyses 1-(3,4-dimethoxyphenyl)-2-(2-methoxyphenoxy)propane-1,3-diol + H2O2 = 3,4-dimethoxybenzaldehyde + guaiacol + glycolaldehyde + H2O. It catalyses the reaction 2 (3,4-dimethoxyphenyl)methanol + H2O2 = 2 (3,4-dimethoxyphenyl)methanol radical + 2 H2O. The protein operates within secondary metabolite metabolism; lignin degradation. Functionally, depolymerization of lignin. Catalyzes the C(alpha)-C(beta) cleavage of the propyl side chains of lignin. The chain is Ligninase H2 (GLG4) from Phanerodontia chrysosporium (White-rot fungus).